The chain runs to 645 residues: 1-deoxy-D-xylulose-5-phosphate synthase 1 (645 aa).

The segment at 1 to 20 (MTDTKTPTLDRVAGPADLRS) is disordered. Thiamine diphosphate is bound by residues His78 and 119 to 121 (AHS). A Mg(2+)-binding site is contributed by Asp150. Residues 151 to 152 (GS), Asn179, Tyr291, and Glu373 each bind thiamine diphosphate. Asn179 serves as a coordination point for Mg(2+).

This sequence belongs to the transketolase family. DXPS subfamily. Homodimer. Requires Mg(2+) as cofactor. Thiamine diphosphate is required as a cofactor.

It carries out the reaction D-glyceraldehyde 3-phosphate + pyruvate + H(+) = 1-deoxy-D-xylulose 5-phosphate + CO2. It participates in metabolic intermediate biosynthesis; 1-deoxy-D-xylulose 5-phosphate biosynthesis; 1-deoxy-D-xylulose 5-phosphate from D-glyceraldehyde 3-phosphate and pyruvate: step 1/1. Functionally, catalyzes the acyloin condensation reaction between C atoms 2 and 3 of pyruvate and glyceraldehyde 3-phosphate to yield 1-deoxy-D-xylulose-5-phosphate (DXP). The protein is 1-deoxy-D-xylulose-5-phosphate synthase 1 of Roseobacter denitrificans (strain ATCC 33942 / OCh 114) (Erythrobacter sp. (strain OCh 114)).